The sequence spans 311 residues: Glycine--tRNA ligase alpha subunit (311 aa).

Belongs to the class-II aminoacyl-tRNA synthetase family. As to quaternary structure, tetramer of two alpha and two beta subunits.

It is found in the cytoplasm. It catalyses the reaction tRNA(Gly) + glycine + ATP = glycyl-tRNA(Gly) + AMP + diphosphate. The sequence is that of Glycine--tRNA ligase alpha subunit from Brucella anthropi (strain ATCC 49188 / DSM 6882 / CCUG 24695 / JCM 21032 / LMG 3331 / NBRC 15819 / NCTC 12168 / Alc 37) (Ochrobactrum anthropi).